A 105-amino-acid polypeptide reads, in one-letter code: UPF0235 protein RAF_ORF1191 (105 aa).

The protein belongs to the UPF0235 family.

The sequence is that of UPF0235 protein RAF_ORF1191 from Rickettsia africae (strain ESF-5).